The sequence spans 317 residues: Cyclin-dependent kinase 1 (317 aa).

The Protein kinase domain maps to Tyr-7–Phe-292. ATP-binding positions include Val-13–Val-21 and Lys-37. Thr-17 bears the Phosphothreonine mark. Position 18 is a phosphotyrosine; by SWE1 (Tyr-18). Asp-133 functions as the Proton acceptor in the catalytic mechanism. At Thr-166 the chain carries Phosphothreonine; by CAK. Residues Asp-296 to Gln-317 are disordered.

It belongs to the protein kinase superfamily. CMGC Ser/Thr protein kinase family. CDC2/CDKX subfamily. Forms several complexes with cyclins CCN1, CLB2, CLN3, and HGC1. The CDC28-CCN1 complex associates with septin CDC11 upon hyphal induction. Interacts with IQG1, RFA2, and HSP90. In terms of processing, phosphorylated at Tyr-18 by SWE1 in a cell cycle-dependent manner. Yeast-form and hyphal cells display similar dynamics of phosphorylation and dephosphorylation of Tyr-18. Tyr-18 phosphorylation leads to inhibition of CDC28 kinase activity.

The catalysed reaction is L-seryl-[protein] + ATP = O-phospho-L-seryl-[protein] + ADP + H(+). It carries out the reaction L-threonyl-[protein] + ATP = O-phospho-L-threonyl-[protein] + ADP + H(+). Its activity is regulated as follows. Phosphorylation at Thr-17 or Tyr-18 inactivates the enzyme, while phosphorylation at Thr-166 activates it. In terms of biological role, cyclin-dependent kinase that acts as a master regulator of the mitotic and meiotic cell cycles. May drive the G1-S transition. Plays a role in mitotic exit. Plays a role in the expression of morphology-related transcription factors, and especially hyphae-specific genes. Binds distinct cyclin subunits as cells progress through the division cycle or flamentous growth. The CDC28-CLB2 complex regulates cytokinesis partly by phosphorylating the actomyosin ring component IQG1. The CDC28-CLN3 complex phosphorylates SLA1 which regulates cortical actin patch dynamics. The CDC28-CCN1 complex phosphorylates CDC11 and SEC2 upon induction of filamentous growth. The CDC28-HGC1 complex also phosphorylates SEC2 and maintains CDC11 phosphorylation throughout hyphal growth. Moreover, the CDC28-HGC1 complex phosphorylates and prevents RGA2 from localizing to hyphal tips, leading to localized CDC42 activation for hyphal extension. CDC28-HGC1 phosphorylation of EFG1 represses cell separation genes during hyphal growth. Additional substrates for CDC28 are RFA2 in G1-phase; MOB2, which is required for the maintenance of polarisome components and for inhibition of cell separation in hyphae; and GIN4 to regulate its association to SEP7 and subsequent septin ring assembly. This is Cyclin-dependent kinase 1 from Candida albicans (strain SC5314 / ATCC MYA-2876) (Yeast).